The chain runs to 174 residues: Co-chaperone protein HscB homolog (174 aa).

Residues 2 to 74 (NYFDLFNVVP…LRRAEHMLSL (73 aa)) enclose the J domain.

The protein belongs to the HscB family. As to quaternary structure, interacts with HscA and stimulates its ATPase activity.

Co-chaperone involved in the maturation of iron-sulfur cluster-containing proteins. Seems to help targeting proteins to be folded toward HscA. The chain is Co-chaperone protein HscB homolog from Shewanella frigidimarina (strain NCIMB 400).